Consider the following 535-residue polypeptide: CTP synthase (535 aa).

Positions 1–266 are amidoligase domain; the sequence is MKTKFIFITG…DEQVVEKLNI (266 aa). S14 is a CTP binding site. A UTP-binding site is contributed by S14. ATP is bound by residues 15-20 and D72; that span reads SIGKGL. Residues D72 and E140 each contribute to the Mg(2+) site. CTP is bound by residues 147–149, 187–192, and K223; these read DIE and KTKPTQ. Residues 187-192 and K223 each bind UTP; that span reads KTKPTQ. The 243-residue stretch at 292-534 folds into the Glutamine amidotransferase type-1 domain; it reads RIAIVGKYVN…IGASLTHRNQ (243 aa). G354 is a binding site for L-glutamine. Residue C381 is the Nucleophile; for glutamine hydrolysis of the active site. L-glutamine is bound by residues 382–385, E405, and R462; that span reads LGMQ. Active-site residues include H507 and E509.

The protein belongs to the CTP synthase family. As to quaternary structure, homotetramer.

The catalysed reaction is UTP + L-glutamine + ATP + H2O = CTP + L-glutamate + ADP + phosphate + 2 H(+). It catalyses the reaction L-glutamine + H2O = L-glutamate + NH4(+). The enzyme catalyses UTP + NH4(+) + ATP = CTP + ADP + phosphate + 2 H(+). It functions in the pathway pyrimidine metabolism; CTP biosynthesis via de novo pathway; CTP from UDP: step 2/2. Allosterically activated by GTP, when glutamine is the substrate; GTP has no effect on the reaction when ammonia is the substrate. The allosteric effector GTP functions by stabilizing the protein conformation that binds the tetrahedral intermediate(s) formed during glutamine hydrolysis. Inhibited by the product CTP, via allosteric rather than competitive inhibition. Functionally, catalyzes the ATP-dependent amination of UTP to CTP with either L-glutamine or ammonia as the source of nitrogen. Regulates intracellular CTP levels through interactions with the four ribonucleotide triphosphates. The polypeptide is CTP synthase (Trichlorobacter lovleyi (strain ATCC BAA-1151 / DSM 17278 / SZ) (Geobacter lovleyi)).